Consider the following 184-residue polypeptide: Signal peptidase I S (184 aa).

Topologically, residues 1–18 (MKSENVSKKKSILEWAKA) are cytoplasmic. The chain crosses the membrane as a helical span at residues 19–39 (IVIAVVLALLIRNFIFAPYVV). Over 40–184 (DGDSMYPTLH…YPFNEMRKTN (145 aa)) the chain is Extracellular. Residues Ser-43 and Lys-83 contribute to the active site.

The protein belongs to the peptidase S26 family.

Its subcellular location is the cell membrane. It catalyses the reaction Cleavage of hydrophobic, N-terminal signal or leader sequences from secreted and periplasmic proteins.. Not essential for cell viability, but required for efficient secretion of many proteins. In Bacillus subtilis (strain 168), this protein is Signal peptidase I S (sipS).